Consider the following 340-residue polypeptide: tRNA N6-adenosine threonylcarbamoyltransferase (340 aa).

Residues H109 and H113 each contribute to the Fe cation site. Residues 132 to 136 (AISGA), D165, G178, and N277 each bind substrate. D302 contacts Fe cation.

It belongs to the KAE1 / TsaD family. Fe(2+) is required as a cofactor.

It localises to the cytoplasm. It carries out the reaction L-threonylcarbamoyladenylate + adenosine(37) in tRNA = N(6)-L-threonylcarbamoyladenosine(37) in tRNA + AMP + H(+). Required for the formation of a threonylcarbamoyl group on adenosine at position 37 (t(6)A37) in tRNAs that read codons beginning with adenine. Is involved in the transfer of the threonylcarbamoyl moiety of threonylcarbamoyl-AMP (TC-AMP) to the N6 group of A37, together with TsaE and TsaB. TsaD likely plays a direct catalytic role in this reaction. The protein is tRNA N6-adenosine threonylcarbamoyltransferase of Chlamydia muridarum (strain MoPn / Nigg).